We begin with the raw amino-acid sequence, 62 residues long: UPF0291 protein CLB_2550 (62 aa).

The protein belongs to the UPF0291 family.

The protein resides in the cytoplasm. The chain is UPF0291 protein CLB_2550 from Clostridium botulinum (strain ATCC 19397 / Type A).